Consider the following 310-residue polypeptide: Methionyl-tRNA formyltransferase (310 aa).

111 to 114 (SLLP) is a binding site for (6S)-5,6,7,8-tetrahydrofolate.

It belongs to the Fmt family.

It carries out the reaction L-methionyl-tRNA(fMet) + (6R)-10-formyltetrahydrofolate = N-formyl-L-methionyl-tRNA(fMet) + (6S)-5,6,7,8-tetrahydrofolate + H(+). Attaches a formyl group to the free amino group of methionyl-tRNA(fMet). The formyl group appears to play a dual role in the initiator identity of N-formylmethionyl-tRNA by promoting its recognition by IF2 and preventing the misappropriation of this tRNA by the elongation apparatus. This is Methionyl-tRNA formyltransferase from Rhodopseudomonas palustris (strain BisB5).